The following is a 1500-amino-acid chain: Carbamoyl-phosphate synthase [ammonia], mitochondrial (1500 aa).

Residues 1–38 (MTRILTACKVVKTLKSGFGLANVTSKRQWDFSRPGIRL) constitute a mitochondrion transit peptide. An anthranilate phosphoribosyltransferase homolog region spans residues 39–218 (LSVKAQTAHI…VKVFGKGNPT (180 aa)). N6-acetyllysine; alternate occurs at positions 55, 57, and 119. Lysine 55 is modified (N6-glutaryllysine; alternate). N6-succinyllysine; alternate is present on residues lysine 55, lysine 57, and lysine 119. Phosphoserine is present on serine 148. An N6-acetyllysine; alternate mark is found at lysine 157 and lysine 171. N6-succinyllysine; alternate is present on lysine 157. N6-glutaryllysine; alternate is present on lysine 171. At lysine 176 the chain carries N6-glutaryllysine. Lysine 182 carries the N6-acetyllysine modification. Serine 189 is modified (phosphoserine). An N6-acetyllysine modification is found at lysine 197. Lysine 207, lysine 210, lysine 214, lysine 219, and lysine 228 each carry N6-acetyllysine; alternate. N6-glutaryllysine; alternate occurs at positions 207, 210, 214, 219, and 228. Lysine 207 is subject to N6-succinyllysine; alternate. Lysine 214 bears the N6-succinyllysine; alternate mark. In terms of domain architecture, Glutamine amidotransferase type-1 spans 219-404 (KVVAVDCGIK…FSLIKKGKGT (186 aa)). Position 237 is an N6-glutaryllysine (lysine 237). Lysine 279 carries the N6-acetyllysine modification. N6-acetyllysine; alternate occurs at positions 280, 287, 307, and 310. N6-glutaryllysine; alternate is present on lysine 280. N6-succinyllysine; alternate is present on residues lysine 287 and lysine 307. N6-glutaryllysine; alternate occurs at positions 307 and 310. Lysine 400 carries the N6-succinyllysine modification. Lysine 402, lysine 412, lysine 453, and lysine 458 each carry N6-glutaryllysine; alternate. Lysine 402 and lysine 412 each carry N6-succinyllysine; alternate. N6-acetyllysine; alternate is present on residues lysine 412, lysine 453, lysine 458, lysine 522, lysine 527, and lysine 532. N6-succinyllysine; alternate occurs at positions 458, 522, and 527. Residues lysine 527 and lysine 532 each carry the N6-glutaryllysine; alternate modification. Serine 537 bears the Phosphoserine; alternate mark. Residue serine 537 is glycosylated (O-linked (GlcNAc) serine; alternate). A Phosphoserine modification is found at serine 540. The region spanning 551–743 (SDKLNEINEK…LAFIAAKIAL (193 aa)) is the ATP-grasp 1 domain. Residues lysine 553 and lysine 560 each carry the N6-acetyllysine; alternate modification. Lysine 553 bears the N6-glutaryllysine; alternate mark. 2 positions are modified to N6-succinyllysine; alternate: lysine 553 and lysine 560. Serine 569 is modified (phosphoserine). N6-acetyllysine; alternate occurs at positions 575, 603, and 612. An N6-succinyllysine; alternate mark is found at lysine 575, lysine 603, and lysine 612. Lysine 630 bears the N6-acetyllysine mark. Residue lysine 728 is modified to N6-glutaryllysine. N6-acetyllysine; alternate occurs at positions 751, 757, 772, 793, 811, 831, 841, and 856. An N6-succinyllysine; alternate mark is found at lysine 751 and lysine 757. N6-glutaryllysine; alternate occurs at positions 757, 772, 793, and 811. N6-succinyllysine; alternate is present on lysine 793. Lysine 831 is subject to N6-succinyllysine; alternate. N6-glutaryllysine; alternate occurs at positions 841 and 856. The residue at position 869 (lysine 869) is an N6-glutaryllysine. Lysine 875, lysine 889, and lysine 892 each carry N6-acetyllysine; alternate. Residues lysine 875, lysine 889, and lysine 892 each carry the N6-glutaryllysine; alternate modification. Residues lysine 875, lysine 889, and lysine 892 each carry the N6-succinyllysine; alternate modification. 2 positions are modified to phosphoserine: serine 896 and serine 898. Residues lysine 908, lysine 915, and lysine 919 each carry the N6-acetyllysine; alternate modification. N6-glutaryllysine; alternate occurs at positions 908, 915, and 919. 2 positions are modified to N6-succinyllysine; alternate: lysine 915 and lysine 919. At lysine 935 the chain carries N6-acetyllysine. Serine 1036 carries the post-translational modification Phosphoserine. Lysine 1074 carries the post-translational modification N6-acetyllysine; alternate. The residue at position 1074 (lysine 1074) is an N6-glutaryllysine; alternate. Lysine 1074 is subject to N6-succinyllysine; alternate. Phosphoserine is present on residues serine 1079, serine 1090, and serine 1093. The 192-residue stretch at 1093–1284 (SAVLDELKVA…FIDVATKVMI (192 aa)) folds into the ATP-grasp 2 domain. Lysine 1100 is modified (N6-acetyllysine; alternate). Lysine 1100 is modified (N6-succinyllysine; alternate). Lysine 1149 carries the post-translational modification N6-succinyllysine. Residues lysine 1168 and lysine 1183 each carry the N6-acetyllysine; alternate modification. Residues lysine 1168 and lysine 1183 each carry the N6-glutaryllysine; alternate modification. N6-succinyllysine; alternate is present on residues lysine 1168 and lysine 1183. The residue at position 1203 (serine 1203) is a Phosphoserine. Position 1222 is an N6-acetyllysine (lysine 1222). Lysine 1224 bears the N6-glutaryllysine mark. Residues lysine 1232, lysine 1269, and lysine 1291 each carry the N6-acetyllysine; alternate modification. An N6-succinyllysine; alternate mark is found at lysine 1232, lysine 1269, and lysine 1291. Serine 1331 carries an O-linked (GlcNAc) serine glycan. Threonine 1332 carries O-linked (GlcNAc) threonine glycosylation. The region spanning 1355–1500 (FKIPQKGILI…YRQYSAGKAA (146 aa)) is the MGS-like domain. An N6-acetyllysine; alternate modification is found at lysine 1356. Residues lysine 1356 and lysine 1360 each carry the N6-glutaryllysine; alternate modification. Lysine 1356 and lysine 1360 each carry N6-succinyllysine; alternate. Threonine 1391, threonine 1394, and tryptophan 1410 together coordinate N-acetyl-L-glutamate. A phosphoserine mark is found at serine 1419 and serine 1431. N-acetyl-L-glutamate contacts are provided by asparagine 1437 and asparagine 1440. Position 1444 is an N6-acetyllysine; alternate (lysine 1444). Lysine 1444 is modified (N6-succinyllysine; alternate). Residue asparagine 1449 participates in N-acetyl-L-glutamate binding. An N6-acetyllysine; alternate mark is found at lysine 1471, lysine 1479, and lysine 1486. 3 positions are modified to N6-succinyllysine; alternate: lysine 1471, lysine 1479, and lysine 1486. An N6-glutaryllysine; alternate mark is found at lysine 1479 and lysine 1486.

Can form homooligomers (monomers as predominant form and dimers). 50% of the mature protein that was isolated had Leu-39 as its N-terminal residue and 50% had Ser-40 suggesting two adjacent processing sites. However, the possibility of proteolytic removal of Leu-39 during the isolation of the enzyme cannot be excluded. Undergoes proteolytic cleavage in the C-terminal region corresponding to the loss of approximately 12 AA residues from the C-terminus. Post-translationally, succinylated at Lys-287 and Lys-1291. Desuccinylated at Lys-1291 by SIRT5, leading to activation. In terms of processing, glutarylated. Glutarylation levels increase during fasting. Deglutarylated by SIRT5 at Lys-55, Lys-219, Lys-412, Lys-889, Lys-892, Lys-915, Lys-1360 and Lys-1486, leading to activation. In terms of tissue distribution, primarily in the liver and small intestine.

Its subcellular location is the mitochondrion. It is found in the nucleus. It localises to the nucleolus. The protein resides in the cell membrane. The enzyme catalyses hydrogencarbonate + NH4(+) + 2 ATP = carbamoyl phosphate + 2 ADP + phosphate + 2 H(+). With respect to regulation, requires N-acetyl-L-glutamate (NAG) as an allosteric activator. N-acetyl-L-beta-phenylglutamate (Phe-NAG) can also activate CPSase I, but with an activation constant that is 2-fold higher than that for NAG. In terms of biological role, involved in the urea cycle of ureotelic animals where the enzyme plays an important role in removing excess ammonia from the cell. This Rattus norvegicus (Rat) protein is Carbamoyl-phosphate synthase [ammonia], mitochondrial (Cps1).